The primary structure comprises 765 residues: Probable beta-glucosidase M (765 aa).

The first 19 residues, 1–19 (MHSISALLSLLGGLALSSA), serve as a signal peptide directing secretion. N24, N71, N93, N126, and N258 each carry an N-linked (GlcNAc...) asparagine glycan. The active site involves D286. N-linked (GlcNAc...) asparagine glycans are attached at residues N314, N321, N432, N519, N541, and N647.

Belongs to the glycosyl hydrolase 3 family.

The protein localises to the secreted. The catalysed reaction is Hydrolysis of terminal, non-reducing beta-D-glucosyl residues with release of beta-D-glucose.. Its pathway is glycan metabolism; cellulose degradation. In terms of biological role, beta-glucosidases are one of a number of cellulolytic enzymes involved in the degradation of cellulosic biomass. Catalyzes the last step releasing glucose from the inhibitory cellobiose. This is Probable beta-glucosidase M (bglM) from Aspergillus niger (strain ATCC MYA-4892 / CBS 513.88 / FGSC A1513).